The sequence spans 71 residues: MMFRLTSVGCILLVIAFLNLVGLTNACTSEGYSCSSDSNCCKNVCCWNVCESHCRHPGKRTRLQGFFKHRR.

The first 26 residues, 1-26 (MMFRLTSVGCILLVIAFLNLVGLTNA), serve as a signal peptide directing secretion. Cystine bridges form between C27–C41, C34–C46, C40–C50, and C45–C54. The residue at position 57 (P57) is a Proline amide. A propeptide spanning residues 61–71 (TRLQGFFKHRR) is cleaved from the precursor.

This sequence belongs to the conotoxin I2 superfamily. Expressed by the venom duct.

Its subcellular location is the secreted. Probable neurotoxin. The protein is Conotoxin Lt11.3 of Conus litteratus (Lettered cone).